Reading from the N-terminus, the 985-residue chain is Exocyst complex component 4 (985 aa).

The stretch at 36-70 (SETTEERQKEKQKIEAEFKRSDLRLNELVSRHDQQ) forms a coiled coil. Residues S235, S456, S459, S682, and S686 each carry the phosphoserine modification. A disordered region spans residues 434–480 (DKSSHVGTSNNSDAFKEHRRNASDASVDDNLAGQLGGSGKGSTSGLF).

It belongs to the SEC8 family. The exocyst complex is composed of Sec3/Exoc1, Sec5/Exoc2, Sec6/Exoc3, Sec8/Exoc4, Sec10/Exoc5, Sec15/Exoc6, exo70/Exoc7 and Exo84/Exoc8. In terms of tissue distribution, abundant in the embryonic and larval glutamatergic neuromuscular junctions (NMJs), pre and postsynaptically.

Functionally, component of the exocyst complex involved in the docking of exocytic vesicles with fusion sites on the plasma membrane. Involved in regulation of synaptic microtubule formation, and also regulation of synaptic growth and glutamate receptor trafficking. Does not appear to be required for basal neurotransmission. This is Exocyst complex component 4 from Drosophila melanogaster (Fruit fly).